The following is an 815-amino-acid chain: G-type lectin S-receptor-like serine/threonine-protein kinase SD1-1 (815 aa).

The first 22 residues, 1–22 (MREIHSLFSLSLFLISSSLSVA), serve as a signal peptide directing secretion. The Extracellular portion of the chain corresponds to 23–438 (LDYNVITPKE…FAKIEFKGRE (416 aa)). Positions 25 to 152 (YNVITPKEFL…EEAVLWQSFD (128 aa)) constitute a Bulb-type lectin domain. 3 N-linked (GlcNAc...) asparagine glycosylation sites follow: asparagine 93, asparagine 249, and asparagine 265. The EGF-like domain occupies 288–326 (PEDECDYYSICGAYAVCGINSKNTPSCSCLQGFKPKSGR). Disulfide bonds link cysteine 292–cysteine 304 and cysteine 298–cysteine 314. 2 N-linked (GlcNAc...) asparagine glycosylation sites follow: asparagine 329 and asparagine 385. Residues 345–428 (CEKKDAFVKF…FGQDVYIRMG (84 aa)) enclose the PAN domain. Disulfide bonds link cysteine 378-cysteine 403 and cysteine 382-cysteine 388. The chain crosses the membrane as a helical span at residues 439-459 (VVGMVVGSVVAIAVVLVVVFA). Over 460–815 (CFRKKIMKRY…EVSITMLQGR (356 aa)) the chain is Cytoplasmic. One can recognise a Protein kinase domain in the interval 500-783 (FSYVNFLGRG…SDSSLPHPTQ (284 aa)). ATP-binding positions include 506-514 (LGRGGFGPV) and lysine 528. Serine 534 bears the Phosphoserine mark. Positions 589–606 (RRSTELDWKKRMNIINGV) are caM-binding. The active-site Proton acceptor is the aspartate 625. Serine 642 is subject to Phosphoserine. Residue threonine 659 is modified to Phosphothreonine. 2 positions are modified to phosphoserine: serine 797 and serine 803. Threonine 810 carries the post-translational modification Phosphothreonine.

This sequence belongs to the protein kinase superfamily. Ser/Thr protein kinase family. As to quaternary structure, interacts with PUB9, PUB13 and PUB14.

It localises to the cell membrane. It carries out the reaction L-seryl-[protein] + ATP = O-phospho-L-seryl-[protein] + ADP + H(+). The enzyme catalyses L-threonyl-[protein] + ATP = O-phospho-L-threonyl-[protein] + ADP + H(+). This Arabidopsis thaliana (Mouse-ear cress) protein is G-type lectin S-receptor-like serine/threonine-protein kinase SD1-1 (SD11).